Here is a 365-residue protein sequence, read N- to C-terminus: Red-sensitive opsin (365 aa).

Residues 1–51 lie on the Extracellular side of the membrane; sequence MASQLNEAIFAARRRNDDDDTTRSSVFTYTNSNNTRGPFEGPNYHIAPRWV. Asn-33 is a glycosylation site (N-linked (GlcNAc...) asparagine). Residues 52–76 form a helical membrane-spanning segment; sequence YNLTSIWMIFVVFASVFTNGLVIVA. At 77 to 88 the chain is on the cytoplasmic side; sequence TLKFKKLRHPLN. Residues 89-113 form a helical membrane-spanning segment; sequence WILVNMAIADLGETVIASTISVFNQ. At 114-128 the chain is on the extracellular side; that stretch reads IFGYFILGHPMCVLE. Cys-125 and Cys-202 are oxidised to a cystine. The helical transmembrane segment at 129–148 threads the bilayer; it reads GFTVSTCGITALWSLTVIAW. Over 149–167 the chain is Cytoplasmic; that stretch reads ERWFVVCKPFGNIKFDEKL. Residues 168-191 traverse the membrane as a helical segment; the sequence is AATGIIFSWVWSAGWCAPPMFGWS. Residues 192–217 lie on the Extracellular side of the membrane; it reads RFWPHGLKTSCGPDVFSGSSDPGVQS. Residues 218 to 245 form a helical membrane-spanning segment; that stretch reads YMLVLMITCCIIPLAIIILCYLHVWWTI. The Cytoplasmic portion of the chain corresponds to 246-267; sequence RQVAQQQKESESTQKAEREVSR. The helical transmembrane segment at 268-291 threads the bilayer; it reads MVVVMIVAYIFCWGPYTFFACFAA. Topologically, residues 292–299 are extracellular; the sequence is FSPGYSFH. The helical transmembrane segment at 300–324 threads the bilayer; the sequence is PLAAALPAYFAKSATIYNPIIYVFM. Lys-311 carries the N6-(retinylidene)lysine modification. At 325 to 365 the chain is on the cytoplasmic side; that stretch reads NRQFRNCIYQMFGKKVDDGSEVSSTSRTEVSSVSNSSVSPA. The segment at 342 to 365 is disordered; the sequence is DGSEVSSTSRTEVSSVSNSSVSPA. Positions 345-365 are enriched in low complexity; it reads EVSSTSRTEVSSVSNSSVSPA.

The protein belongs to the G-protein coupled receptor 1 family. Opsin subfamily. Phosphorylated on some or all of the serine and threonine residues present in the C-terminal region.

It is found in the membrane. Its function is as follows. Visual pigments are the light-absorbing molecules that mediate vision. They consist of an apoprotein, opsin, covalently linked to cis-retinal. This is Red-sensitive opsin (opn1lw1) from Xenopus laevis (African clawed frog).